We begin with the raw amino-acid sequence, 397 residues long: Chorismate synthase (397 aa).

Residues Arg-40 and Arg-46 each coordinate NADP(+). FMN contacts are provided by residues 129–131 (RSS), 257–258 (QA), Gly-302, 317–321 (KPISS), and Arg-343.

This sequence belongs to the chorismate synthase family. As to quaternary structure, homotetramer. FMNH2 serves as cofactor.

It carries out the reaction 5-O-(1-carboxyvinyl)-3-phosphoshikimate = chorismate + phosphate. It participates in metabolic intermediate biosynthesis; chorismate biosynthesis; chorismate from D-erythrose 4-phosphate and phosphoenolpyruvate: step 7/7. Catalyzes the anti-1,4-elimination of the C-3 phosphate and the C-6 proR hydrogen from 5-enolpyruvylshikimate-3-phosphate (EPSP) to yield chorismate, which is the branch point compound that serves as the starting substrate for the three terminal pathways of aromatic amino acid biosynthesis. This reaction introduces a second double bond into the aromatic ring system. This is Chorismate synthase from Chlorobium phaeobacteroides (strain DSM 266 / SMG 266 / 2430).